The primary structure comprises 429 residues: Melanoma-associated antigen 11 (429 aa).

2 disordered regions span residues 1-30 and 188-215; these read METQ…GDFG and IFGS…IDPE. Over residues 194–209 the composition is skewed to polar residues; the sequence is DEGSGSQEKEGPSTSP. Residues 222-421 enclose the MAGE domain; that stretch reads LHDKIIDLVH…TSYPSLYEDA (200 aa).

In terms of tissue distribution, expressed in tumors of several types, such as melanoma, head and neck squamous cell carcinoma, lung carcinoma and breast carcinoma. Expressed in testis, ovary, prostate, cancerous prostate, breast and adrenal tissue.

The protein resides in the nucleus. It is found in the cytoplasm. In terms of biological role, acts as androgen receptor coregulator that increases androgen receptor activity by modulating the receptors interdomain interaction. May play a role in embryonal development and tumor transformation or aspects of tumor progression. The chain is Melanoma-associated antigen 11 from Homo sapiens (Human).